Reading from the N-terminus, the 380-residue chain is Chaperone protein DnaJ (380 aa).

In terms of domain architecture, J spans 5 to 70 (DYYEVLGVAK…QKRAAYDQYG (66 aa)). Residues 140-218 (GYDTQIRVPS…CHGAGKVKET (79 aa)) form a CR-type zinc finger. Residues C153, C156, C170, C173, C192, C195, C206, and C209 each contribute to the Zn(2+) site. 4 CXXCXGXG motif repeats span residues 153–160 (CEVCHGSG), 170–177 (CPTCSGSG), 192–199 (CPKCHGTG), and 206–213 (CGHCHGAG).

This sequence belongs to the DnaJ family. Homodimer. Requires Zn(2+) as cofactor.

The protein resides in the cytoplasm. Functionally, participates actively in the response to hyperosmotic and heat shock by preventing the aggregation of stress-denatured proteins and by disaggregating proteins, also in an autonomous, DnaK-independent fashion. Unfolded proteins bind initially to DnaJ; upon interaction with the DnaJ-bound protein, DnaK hydrolyzes its bound ATP, resulting in the formation of a stable complex. GrpE releases ADP from DnaK; ATP binding to DnaK triggers the release of the substrate protein, thus completing the reaction cycle. Several rounds of ATP-dependent interactions between DnaJ, DnaK and GrpE are required for fully efficient folding. Also involved, together with DnaK and GrpE, in the DNA replication of plasmids through activation of initiation proteins. The polypeptide is Chaperone protein DnaJ (Paraburkholderia xenovorans (strain LB400)).